A 587-amino-acid chain; its full sequence is MLNSRSVGSTGSNNTPLGRRRFDEKPDSLPPLPDANGMSNGYRDSYKSNSRMDHRPDGYHDGRGRRAYRKHYWGHPTPIEEMLPSQMELETAVKSCMTMEQLELYSLNVRLEEITQKLRTGDVVPHHRERSPSPPPQYDNHGRRLNTREIRYKKKLEDERHRIIERAMKMVPGFRAPSDYRRPAKTQEKVYVPVKDYPEINFIGLLIGPRGHTLKDMEAKSGAKIAIRGKGSVKEGKGRSDPSVRGNMEEDLHCLVTADSEDKINHAIKLIDNVIQTAASVPEGQNDLKRNQLRQLATLNGTLRDDENQVCQNCGNVGHRRFDCPERINHTMNIVCRHCGSIGHIARDCPVRDQQPPMADSTADREYQSLMQELGGGSAISNGNGEPQKSIEFSESGAASPQAGHPPPWAAASTSVSSSTSSPAPWAKPASSAAPSNPAPWQQPAAPQSAPALSMNPSSLPPWQQPTQQSAVQPSNLVPSQNAPFIPGTSAPLPPTTFAPPGVPLPPIPGAPGMPNLNMSQPPMVPPGMALPPGMPAPFPGYPAVPAMPGIPGATAPPGAPGSYNTSESSNLNAPPGVSMPNGYSNR.

Positions 1-16 (MLNSRSVGSTGSNNTP) are enriched in polar residues. 2 disordered regions span residues 1-64 (MLNS…DGRG) and 121-142 (GDVV…DNHG). The span at 44–64 (DSYKSNSRMDHRPDGYHDGRG) shows a compositional bias: basic and acidic residues. A phosphoserine mark is found at serine 131 and serine 133. Residues 191–271 (YVPVKDYPEI…DKINHAIKLI (81 aa)) form the KH domain. 2 CCHC-type zinc fingers span residues 309–326 (QVCQ…DCPE) and 334–351 (IVCR…DCPV). 2 disordered regions span residues 375–490 (GGGS…PGTS) and 551–587 (IPGA…YSNR). Over residues 379–399 (AISNGNGEPQKSIEFSESGAA) the composition is skewed to polar residues. The span at 410–454 (AAASTSVSSSTSSPAPWAKPASSAAPSNPAPWQQPAAPQSAPALS) shows a compositional bias: low complexity. 2 stretches are compositionally biased toward polar residues: residues 465–483 (QPTQ…SQNA) and 563–573 (SYNTSESSNLN).

The protein belongs to the BBP/SF1 family. As to quaternary structure, U2AF large subunit (u2af59), U2AF small subunit (u2af23) and bpb1 interact to form a complex required for complex A formation.

It is found in the cytoplasm. The protein resides in the nucleus. Functionally, necessary for the splicing of pre-mRNA. The BPB1(SF1)-u2af59-u2af23 complex has a role in the recognition of the branch site (5'-UACUAAC-3'), the pyrimidine tract and the 3'-splice site at the 3'-end of introns. This is Branchpoint-bridging protein (bpb1) from Schizosaccharomyces pombe (strain 972 / ATCC 24843) (Fission yeast).